The primary structure comprises 395 residues: WW domain-containing transcription regulator protein 1 (395 aa).

Lysine 46 is covalently cross-linked (Glycyl lysine isopeptide (Lys-Gly) (interchain with G-Cter in ubiquitin)). Positions 52–116 (FFKEPDSGSH…AQQHAHLRQQ (65 aa)) are disordered. Residues 61-70 (HSRQSSTDSS) show a composition bias toward polar residues. The residue at position 62 (serine 62) is a Phosphoserine. Serine 89 carries the phosphoserine; by LATS2 modification. The 34-residue stretch at 124-157 (LPLPPGWEMTFTATGQRYFLNHIEKITTWQDPRK) folds into the WW domain. The interval 221 to 395 (PNALTTQQQQ…NKSEPFLTWL (175 aa)) is required for interaction with PALS1. Residues 224-258 (LTTQQQQQQKLRLQRIQMERERIRMRQEELMRQEA) are a coiled coil. Residues 277–293 (PAMSTDMRSVTNSSSDP) are compositionally biased toward polar residues. The tract at residues 277–308 (PAMSTDMRSVTNSSSDPFLNGGPYHSREQSTD) is disordered. Serine 290 bears the Phosphoserine mark. Serine 306 is subject to Phosphoserine; by LATS2. Residues 389 to 395 (EPFLTWL) carry the PDZ-binding motif.

As to quaternary structure, binds to SLC9A3R2 via the PDZ motif at the plasma membrane. Binds to YWHAZ in vivo and in vitro through the phosphoserine-binding motif RSHSSP. Interacts (via coiled-coil domain) with SMAD2 (via MH1 domain), SMAD3 and SMAD4. Interacts with MED15. Interacts with PAX8 and NKX2-1. Interacts with TEAD1, TEAD2, TEAD3 and TEAD4. Interacts (via WW domain) with PALS1. Interacts with LATS1. Interacts with YAP1 (when phosphorylated at 'Ser-112'). Interacts (via WW domain) with PRRG4 (via cytoplasmic domain). Interacts (via WW domain) with AMOTL2 (via PPXY motif); the interaction promotes WWTR1/TAZ localization to the cytoplasm and tight junctions, thereby inhibiting its transcriptional coactivator properties. Interacts (via WW domain) with AMOT; the interaction facilitates translocation of WWTR1/TAZ to the cytoplasm. In terms of processing, phosphorylated by LATS2 and STK3/MST2. Phosphorylation by LATS2 results in creation of 14-3-3 binding sites, retention in the cytoplasm, and functional inactivation. Phosphorylation results in the inhibition of transcriptional coactivation through YWHAZ-mediated nuclear export. Post-translationally, ubiquitinated at Lys-46; leading to proteasomal degradation. Deubiquitinated and stabilized by UCHL1 at Lys-46; leading to inhibition of osteoclastogenesis. As to expression, highly expressed in kidney, heart, placenta and lung.

It is found in the nucleus. The protein resides in the cytoplasm. The protein localises to the cell membrane. It localises to the cell junction. Its subcellular location is the tight junction. In terms of biological role, transcriptional coactivator which acts as a downstream regulatory target in the Hippo signaling pathway that plays a pivotal role in organ size control and tumor suppression by restricting proliferation and promoting apoptosis. The core of this pathway is composed of a kinase cascade wherein STK3/MST2 and STK4/MST1, in complex with its regulatory protein SAV1, phosphorylates and activates LATS1/2 in complex with its regulatory protein MOB1, which in turn phosphorylates and inactivates YAP1 oncoprotein and WWTR1/TAZ. WWTR1 enhances PAX8 and NKX2-1/TTF1-dependent gene activation. In conjunction with YAP1, involved in the regulation of TGFB1-dependent SMAD2 and SMAD3 nuclear accumulation. Plays a key role in coupling SMADs to the transcriptional machinery such as the mediator complex. Regulates embryonic stem-cell self-renewal, promotes cell proliferation and epithelial-mesenchymal transition. The protein is WW domain-containing transcription regulator protein 1 of Mus musculus (Mouse).